Here is a 191-residue protein sequence, read N- to C-terminus: MTTPTAARHMVNFITGNTNKLCEVRAILQPAIQVESQTLDLIEIQGTLEEVTLDKCRRAADLVEGPVLVEDTCLCFNALNGLPGPYIKWFMKSLGHTGLNNLLAAYEDKSAQAVCTFAYSAGPGHEPILFQGITDGKIVPARGPGDFGWDAIFEYEGQTYAEMDKAAKNKISHRYRALAKLQEWFAKEMAP.

15 to 20 (TGNTNK) provides a ligand contact to ITP. Glutamate 43 is a Mg(2+) binding site. ITP contacts are provided by residues lysine 55, 71–72 (DT), lysine 88, 147–150 (FGWD), lysine 168, and 173–174 (HR).

It belongs to the HAM1 NTPase family. As to quaternary structure, homodimer. The cofactor is Mg(2+). Mn(2+) is required as a cofactor.

Its subcellular location is the cytoplasm. The protein localises to the nucleus. It carries out the reaction ITP + H2O = IMP + diphosphate + H(+). The enzyme catalyses dITP + H2O = dIMP + diphosphate + H(+). The catalysed reaction is XTP + H2O = XMP + diphosphate + H(+). Functionally, pyrophosphatase that hydrolyzes non-canonical purine nucleotides such as inosine triphosphate (ITP), deoxyinosine triphosphate (dITP) or xanthosine 5'-triphosphate (XTP) to their respective monophosphate derivatives. The enzyme does not distinguish between the deoxy- and ribose forms. Probably excludes non-canonical purines from RNA and DNA precursor pools, thus preventing their incorporation into RNA and DNA and avoiding chromosomal lesions. The chain is Inosine triphosphate pyrophosphatase from Chaetomium globosum (strain ATCC 6205 / CBS 148.51 / DSM 1962 / NBRC 6347 / NRRL 1970) (Soil fungus).